We begin with the raw amino-acid sequence, 295 residues long: Host-inducible protein A (295 aa).

Residues 1–20 (MHLDRSDSNGGSSRYTLDHE) form a disordered region.

Belongs to the NopP family.

The protein is Host-inducible protein A of Rhizobium fredii (Sinorhizobium fredii).